The chain runs to 213 residues: Thymidylate kinase (213 aa).

Residue 10–17 (GLEGAGKT) coordinates ATP.

Belongs to the thymidylate kinase family.

The enzyme catalyses dTMP + ATP = dTDP + ADP. Its function is as follows. Phosphorylation of dTMP to form dTDP in both de novo and salvage pathways of dTTP synthesis. This Klebsiella pneumoniae subsp. pneumoniae (strain ATCC 700721 / MGH 78578) protein is Thymidylate kinase.